We begin with the raw amino-acid sequence, 52 residues long: Large ribosomal subunit protein bL33 (52 aa).

The protein belongs to the bacterial ribosomal protein bL33 family.

This is Large ribosomal subunit protein bL33 from Chlamydia trachomatis serovar L2 (strain ATCC VR-902B / DSM 19102 / 434/Bu).